Reading from the N-terminus, the 504-residue chain is MWWFRRRDRAPLRATSSLSLRWRVMLLAMSMVAMVVVLMSFAVYAVISAALYSDIDNQLQSRAQLLIASGSLAADPGKAIEGTAYSDVNAMLVNPGQSIYTAQQPGQTLPVGAAEKAVIRGELFMSRRTTADQRVLAIRLTNGSSLLISKSLKPTEAVMNKLRWVLLIVGGIGVAVAAVAGGMVTRAGLRPVGRLTEAAERVARTDDLRPIPVFGSDELARLTEAFNLMLRALAESRERQARLVTDAGHELRTPLTSLRTNVELLMASMAPGAPRLPKQEMVDLRADVLAQIEELSTLVGDLVDLSRGDAGEVVHEPVDMADVVDRSLERVRRRRNDILFDVEVIGWQVYGDTAGLSRMALNLMDNAAKWSPPGGHVGVRLSQLDASHAELVVSDRGPGIPVQERRLVFERFYRSASARALPGSGLGLAIVKQVVLNHGGLLRIEDTDPGGQPPGTSIYVLLPGRRMPIPQLPGATAGARSTDIENSRGSANVISVESQSTRAT.

Over 1–26 (MWWFRRRDRAPLRATSSLSLRWRVML) the chain is Cytoplasmic. The chain crosses the membrane as a helical span at residues 27-47 (LAMSMVAMVVVLMSFAVYAVI). The Extracellular portion of the chain corresponds to 48 to 163 (SAALYSDIDN…PTEAVMNKLR (116 aa)). A helical transmembrane segment spans residues 164 to 184 (WVLLIVGGIGVAVAAVAGGMV). Topologically, residues 185 to 504 (TRAGLRPVGR…SVESQSTRAT (320 aa)) are cytoplasmic. Residues 186–238 (RAGLRPVGRLTEAAERVARTDDLRPIPVFGSDELARLTEAFNLMLRALAESRE) form the HAMP domain. Positions 246-466 (DAGHELRTPL…SIYVLLPGRR (221 aa)) constitute a Histidine kinase domain. H249 carries the post-translational modification Phosphohistidine; by autocatalysis. The segment at 471-504 (QLPGATAGARSTDIENSRGSANVISVESQSTRAT) is disordered. A compositionally biased stretch (polar residues) spans 487–504 (SRGSANVISVESQSTRAT).

Mg(2+) is required as a cofactor. Mn(2+) serves as cofactor. Autophosphorylated.

The protein localises to the cell membrane. The catalysed reaction is ATP + protein L-histidine = ADP + protein N-phospho-L-histidine.. Functionally, member of the two-component regulatory system MprB/MprA which contributes to maintaining a balance among several systems involved in stress resistance and is required for establishment and maintenance of persistent infection in the host. In response to environmental signals MprB acts both as a membrane-associated protein kinase that undergoes autophosphorylation and subsequently transfers the phosphate to MprA, and a protein phosphatase that dephosphorylates phospho-MprA. In Mycobacterium tuberculosis (strain ATCC 25177 / H37Ra), this protein is Signal transduction histidine-protein kinase/phosphatase MprB (mprB).